Reading from the N-terminus, the 425-residue chain is Serine--tRNA ligase (425 aa).

Residue 228–230 participates in L-serine binding; the sequence is TAE. 259–261 is an ATP binding site; sequence RSE. Glu282 contacts L-serine. 346-349 is a binding site for ATP; it reads EIAS. Ser382 is a binding site for L-serine.

Belongs to the class-II aminoacyl-tRNA synthetase family. Type-1 seryl-tRNA synthetase subfamily. In terms of assembly, homodimer. The tRNA molecule binds across the dimer.

It localises to the cytoplasm. The catalysed reaction is tRNA(Ser) + L-serine + ATP = L-seryl-tRNA(Ser) + AMP + diphosphate + H(+). It catalyses the reaction tRNA(Sec) + L-serine + ATP = L-seryl-tRNA(Sec) + AMP + diphosphate + H(+). Its pathway is aminoacyl-tRNA biosynthesis; selenocysteinyl-tRNA(Sec) biosynthesis; L-seryl-tRNA(Sec) from L-serine and tRNA(Sec): step 1/1. Catalyzes the attachment of serine to tRNA(Ser). Is also able to aminoacylate tRNA(Sec) with serine, to form the misacylated tRNA L-seryl-tRNA(Sec), which will be further converted into selenocysteinyl-tRNA(Sec). This is Serine--tRNA ligase from Rickettsia peacockii (strain Rustic).